A 370-amino-acid polypeptide reads, in one-letter code: A-type ATP synthase subunit C (370 aa).

Belongs to the V-ATPase V0D/AC39 subunit family. In terms of assembly, has multiple subunits with at least A(3), B(3), C, D, E, F, H, I and proteolipid K(x).

It is found in the cell membrane. Functionally, component of the A-type ATP synthase that produces ATP from ADP in the presence of a proton gradient across the membrane. The polypeptide is A-type ATP synthase subunit C (Pyrococcus abyssi (strain GE5 / Orsay)).